A 332-amino-acid polypeptide reads, in one-letter code: Formamidase (332 aa).

Residues 14-259 (FLAALIQYPV…WEIVTAEVYP (246 aa)) form the CN hydrolase domain. Catalysis depends on Glu60, which acts as the Proton acceptor. The active-site Proton donor is Lys132. Residue Cys165 is the Nucleophile of the active site.

Belongs to the carbon-nitrogen hydrolase superfamily. Aliphatic amidase family.

It catalyses the reaction formamide + H2O = formate + NH4(+). In terms of biological role, is an aliphatic amidase with a restricted substrate specificity, as it only hydrolyzes formamide. In Bacillus cereus (strain Q1), this protein is Formamidase.